A 363-amino-acid chain; its full sequence is MALYLGVMSGTSLDGLDIALVEQGEQLELLATHYLPMPPDLRQDLLALCSSGPDEIARAALAENRWASLAGEGIRQLLARQGLKPEAVRAIGSHGQTIRHEPARGFTVQIGNPALLAELTGISVVADFRRRDVAAGGQGAPLVPAFHETLFSQLGRRLAILNVGGFSNLSLIEQDKPVHGFDCGPGNVLLDAWIEREHGHPYDADGAWAASGVAQPGLLSALMADPFFAGSGPKSTGREVFNLPWLDRHLANLPAYRAQDVQATLLELTARSIIDSLGKAQQGTEALLVCGGGARNGALMARLGQLLPAARVASTGAYGVDPDWVEAMAFAWLAHCCLEGIAANRPSVTAAKGLRVLGAIYPA.

An ATP-binding site is contributed by 10-17 (GTSLDGLD).

It belongs to the anhydro-N-acetylmuramic acid kinase family.

It carries out the reaction 1,6-anhydro-N-acetyl-beta-muramate + ATP + H2O = N-acetyl-D-muramate 6-phosphate + ADP + H(+). Its pathway is amino-sugar metabolism; 1,6-anhydro-N-acetylmuramate degradation. The protein operates within cell wall biogenesis; peptidoglycan recycling. Catalyzes the specific phosphorylation of 1,6-anhydro-N-acetylmuramic acid (anhMurNAc) with the simultaneous cleavage of the 1,6-anhydro ring, generating MurNAc-6-P. Is required for the utilization of anhMurNAc either imported from the medium or derived from its own cell wall murein, and thus plays a role in cell wall recycling. Contributes to intrinsic fosfomycin resistance in P.putida. This chain is Anhydro-N-acetylmuramic acid kinase, found in Pseudomonas putida (strain ATCC 47054 / DSM 6125 / CFBP 8728 / NCIMB 11950 / KT2440).